The chain runs to 281 residues: Endonuclease III-like protein 1 (281 aa).

Residues 1–17 constitute a mitochondrion transit peptide; sequence MCAAAPRGGGRAARRLG. The interval 1–60 is disordered; it reads MCAAAPRGGGRAARRLGAATAGSRVPSAAPRYSRRTRRVPIAYEAEPKPESPGPKWEPEN. The segment covering 15-24 has biased composition (low complexity); it reads RLGAATAGSR. The HhH domain occupies 168 to 192; the sequence is KYGGDIPGTVEELVKLPGVGPKMAH. The active-site Nucleophile; for N-glycosylase activity is the Lys-189. The [4Fe-4S] cluster site is built by Cys-259, Cys-266, Cys-269, and Cys-275.

Belongs to the Nth/MutY family. It depends on [4Fe-4S] cluster as a cofactor.

The protein localises to the nucleus. Its subcellular location is the mitochondrion. The catalysed reaction is 2'-deoxyribonucleotide-(2'-deoxyribose 5'-phosphate)-2'-deoxyribonucleotide-DNA = a 3'-end 2'-deoxyribonucleotide-(2,3-dehydro-2,3-deoxyribose 5'-phosphate)-DNA + a 5'-end 5'-phospho-2'-deoxyribonucleoside-DNA + H(+). Bifunctional DNA N-glycosylase with associated apurinic/apyrimidinic (AP) lyase function that catalyzes the first step in base excision repair (BER), the primary repair pathway for the repair of oxidative DNA damage. The DNA N-glycosylase activity releases the damaged DNA base from DNA by cleaving the N-glycosidic bond, leaving an AP site. The AP lyase activity cleaves the phosphodiester bond 3' to the AP site by a beta-elimination. Primarily recognizes and repairs oxidative base damage of pyrimidines. In Gallus gallus (Chicken), this protein is Endonuclease III-like protein 1.